A 438-amino-acid polypeptide reads, in one-letter code: Transposon Ty2-B Gag polyprotein (438 aa).

3 stretches are compositionally biased toward polar residues: residues 1-11, 19-39, and 49-60; these read MESQQLHQNPH, ASVT…SASN, and KVNSQQETTPGT. 3 disordered regions span residues 1-88, 364-397, and 419-438; these read MESQ…YQQH, KNVS…AKAH, and SSQY…TERI. The tract at residues 295–397 is RNA-binding; it reads ENNINVSDRL…SSKPRAAKAH (103 aa). Over residues 369–381 the composition is skewed to low complexity; that stretch reads TSPNTTNTKVTTR.

Homotrimer.

It is found in the cytoplasm. Capsid protein (CA) is the structural component of the virus-like particle (VLP), forming the shell that encapsulates the retrotransposons dimeric RNA genome. The particles are assembled from trimer-clustered units and there are holes in the capsid shells that allow for the diffusion of macromolecules. CA also has nucleocapsid-like chaperone activity, promoting primer tRNA(i)-Met annealing to the multipartite primer-binding site (PBS), dimerization of Ty2 RNA and initiation of reverse transcription. The protein is Transposon Ty2-B Gag polyprotein (TY2A-B) of Saccharomyces cerevisiae (strain ATCC 204508 / S288c) (Baker's yeast).